Reading from the N-terminus, the 163-residue chain is Sperm acrosome membrane-associated protein 3 (163 aa).

The first 35 residues, 1–35 (MEAGSWAPRRWPRPPGIVLLALASVLSSLLSSGQA), serve as a signal peptide directing secretion. The 128-residue stretch at 36–163 (RVYSRCELAR…LSDWVDGCEL (128 aa)) folds into the C-type lysozyme domain. 4 cysteine pairs are disulfide-bonded: cysteine 41-cysteine 161, cysteine 65-cysteine 149, cysteine 99-cysteine 114, and cysteine 110-cysteine 128.

The protein belongs to the glycosyl hydrolase 22 family. In terms of assembly, interacts with ASTL.

Its subcellular location is the secreted. Its function is as follows. Sperm surface membrane protein that may be involved in sperm-egg plasma membrane adhesion and fusion during fertilization. It could be a potential receptor for the egg oligosaccharide residue N-acetylglucosamine, which is present in the extracellular matrix over the egg plasma membrane. The processed form has no detectable bacteriolytic activity in vitro. The sequence is that of Sperm acrosome membrane-associated protein 3 (SPACA3) from Bos taurus (Bovine).